The sequence spans 692 residues: MPSRPNPTRPKLFHNRTKTLFLILTISSSLVIFFAILYFIYHLWISLLNRSRTIPFDVAAASPLKLQLFTYKELKLATNDFDESNVIGKGGSGTVFRGITRDGKLFAVKRLDNLSIQTETEFQNELQILGGLKSSFLVTLLGYCVEKNHRFLIYEYMPNKSLQELLFNEDGDSCLNWERRFGIILDVAKALEFMHFGCDPPVIHGDIKPSNVLLDSEFRAKISDFGLSRVKVEGGYGVDLFSQELSGNFGGESTPQTAIGTPTHHEVDFALALQASSSSKNSRTSRNIKEMSLNSMSLAMDGETKGKEVSNDVVLSCEDHEFDQGKEMNLLSPNSVLDLGKGSKQWGRDWWWKQEGSGELCSKDYVREWIGSQIDTANPDWDDDKKVITTPELGVSTRTIDKAEHRDESGLNESRFDTLEEKFAKEEISERKNKRSKNKKKKHRNMEEWWKEEEHQEEMNNKKKIGVLRIKFKNHLKFPHFRYCFRQKGENSVHDREGEAAGEFSFRRGWRRKSNSSSKKKKKNNNGSMGSEMWSGDLFSRELSSTTSMRGTLCYIAPEYGGGCCYLMEKGDIYSFGVLILVIVSGRRPLHVLASPMKLEKANLVSWCRQLAQSGNVLELVDEKLKDGYNKEEAGLCINLALACLQKAPELRPDVSEVVRILRGEMDISSTAFEFSPSPPGKVYGSRSKRRS.

A helical transmembrane segment spans residues 20–40 (LFLILTISSSLVIFFAILYFI). In terms of domain architecture, Protein kinase spans 81–673 (FDESNVIGKG…GEMDISSTAF (593 aa)). Residues 87 to 95 (IGKGGSGTV) and Lys-109 contribute to the ATP site. Residue Asp-206 is the Proton acceptor of the active site. Disordered stretches follow at residues 427 to 446 (EISE…HRNM) and 511 to 533 (RRKS…GSEM). Composition is skewed to basic residues over residues 432-444 (KNKR…KKHR) and 511-524 (RRKS…KKKN).

This sequence belongs to the protein kinase superfamily. Ser/Thr protein kinase family.

It localises to the cell membrane. It catalyses the reaction L-seryl-[protein] + ATP = O-phospho-L-seryl-[protein] + ADP + H(+). The catalysed reaction is L-threonyl-[protein] + ATP = O-phospho-L-threonyl-[protein] + ADP + H(+). The protein is Putative receptor-like protein kinase At1g80870 of Arabidopsis thaliana (Mouse-ear cress).